The sequence spans 191 residues: Penicillin-binding protein activator LpoB (191 aa).

An N-terminal signal peptide occupies residues 1 to 16; sequence MKRYLSLALAALVLTG. The N-palmitoyl cysteine moiety is linked to residue C17. C17 carries the S-diacylglycerol cysteine lipid modification.

This sequence belongs to the LpoB family. As to quaternary structure, interacts with PBP1b.

The protein resides in the cell outer membrane. Functionally, regulator of peptidoglycan synthesis that is essential for the function of penicillin-binding protein 1B (PBP1b). The chain is Penicillin-binding protein activator LpoB from Yersinia pestis (strain D182038).